Reading from the N-terminus, the 468-residue chain is Microtubule-associated tyrosine carboxypeptidase 1 (468 aa).

Residues 1-10 show a composition bias toward polar residues; that stretch reads MVLDSGTQVY. Disordered stretches follow at residues 1–39 and 77–112; these read MVLD…PPLY and MKRS…TLRP. H277 contributes to the Zn(2+) binding site. E278 functions as the Nucleophile in the catalytic mechanism. Zn(2+)-binding residues include H282 and E313.

This sequence belongs to the peptidase MATCAP family. It depends on Zn(2+) as a cofactor.

The protein resides in the cytoplasm. The protein localises to the cytoskeleton. The enzyme catalyses C-terminal L-alpha-aminoacyl-L-glutamyl-L-glutamyl-L-tyrosyl-[tubulin] + H2O = C-terminal L-alpha-aminoacyl-L-glutamyl-L-glutamyl-[tubulin] + L-tyrosine. It catalyses the reaction C-terminal L-alpha-aminoacyl-L-glutamyl-L-glutamyl-L-phenylalanyl-[tubulin] + H2O = C-terminal L-alpha-aminoacyl-L-glutamyl-L-glutamyl-[tubulin] + L-phenylalanine. In terms of biological role, tyrosine carboxypeptidase that removes the C-terminal tyrosine residue of alpha-tubulin, thereby regulating microtubule dynamics and function. Also able to remove the C-terminal phenylalanine residue of alpha-tubulin TUBA8. Recognizes adjacent tubulin dimers along the same protofilament. The sequence is that of Microtubule-associated tyrosine carboxypeptidase 1 from Rattus norvegicus (Rat).